Here is a 197-residue protein sequence, read N- to C-terminus: Phosphoheptose isomerase (197 aa).

The 163-residue stretch at 34-196 folds into the SIS domain; that stretch reads MVQCLLGGNK…DRTLFPQDDQ (163 aa). Residue 49 to 51 coordinates substrate; that stretch reads NGG. Residues histidine 58 and glutamate 62 each contribute to the Zn(2+) site. Substrate contacts are provided by residues glutamate 62, 91-92, 117-119, serine 122, and glutamine 172; these read ND and STS. Residues glutamine 172 and histidine 180 each contribute to the Zn(2+) site.

The protein belongs to the SIS family. GmhA subfamily. In terms of assembly, homotetramer. Zn(2+) is required as a cofactor.

Its subcellular location is the cytoplasm. The catalysed reaction is 2 D-sedoheptulose 7-phosphate = D-glycero-alpha-D-manno-heptose 7-phosphate + D-glycero-beta-D-manno-heptose 7-phosphate. Its pathway is carbohydrate biosynthesis; D-glycero-D-manno-heptose 7-phosphate biosynthesis; D-glycero-alpha-D-manno-heptose 7-phosphate and D-glycero-beta-D-manno-heptose 7-phosphate from sedoheptulose 7-phosphate: step 1/1. Catalyzes the isomerization of sedoheptulose 7-phosphate in D-glycero-D-manno-heptose 7-phosphate. The chain is Phosphoheptose isomerase from Shewanella loihica (strain ATCC BAA-1088 / PV-4).